Reading from the N-terminus, the 493-residue chain is Neuronal acetylcholine receptor subunit alpha-6 (493 aa).

The first 30 residues, 1–30 (MLNGWGRGDLRSGLCLWICGFLAFFKGSRG), serve as a signal peptide directing secretion. Residues 31–240 (CVSEEQLFHT…TYSFYIRRLP (210 aa)) are Extracellular-facing. N-linked (GlcNAc...) asparagine glycans are attached at residues Asn54 and Asn171. Disulfide bonds link Cys158–Cys172 and Cys222–Cys223. Helical transmembrane passes span 241–265 (MFYT…FYLP), 272–290 (VTLC…LVIT), and 306–327 (YLLF…VLNI). Topologically, residues 328–464 (HYRTPATHTM…WKYMAMVVDR (137 aa)) are cytoplasmic. Ser401 carries the post-translational modification Phosphoserine. Residues 465-484 (VFLWVFIIVCVFGTVGLFLQ) traverse the membrane as a helical segment.

The protein belongs to the ligand-gated ion channel (TC 1.A.9) family. Acetylcholine receptor (TC 1.A.9.1) subfamily. Alpha-6/CHRNA6 sub-subfamily. Neuronal AChR is composed of two different types of subunits: alpha and non-alpha (beta). CHRNA6/alpha-6 subunit can be combined to CHRNB2/beta-2 and CHRNA4/alpha-4 to give rise to functional receptors. Interacts with LYPD6. In terms of tissue distribution, predominantly expressed in only a few brain areas, including dopaminergic neurons, norepirephrine neurons and cells of the visual system.

Its subcellular location is the synaptic cell membrane. It catalyses the reaction Ca(2+)(in) = Ca(2+)(out). The enzyme catalyses K(+)(in) = K(+)(out). It carries out the reaction Na(+)(in) = Na(+)(out). Activated by a myriad of ligands such as acetylcholine, cytisine and nicotine. CHRNA6 nAChR activity is inhibited by the antagonists alpha-conotoxin MII and PIA, a small disulfide-constrained peptides from cone snails. Component of neuronal acetylcholine receptors (nAChRs) that function as pentameric, ligand-gated cation channels with high calcium permeability among other activities. nAChRs are excitatory neurotrasnmitter receptors formed by a collection of nAChR subunits known to mediate synaptic transmission in the nervous system and the neuromuscular junction. Each nAchR subunit confers differential attributes to channel properties, including activation, deactivation and desensitization kinetics, pH sensitivity, cation permeability, and binding to allosteric modulators. CHRNA6 forms pentameric channels with CHRNB2 and CHRNA4 that exhibit high sensitivity to ACh and nicotine and are predominantly expressed in only a few brain areas, including dopaminergic neurons, norepirephrine neurons and cells of the visual system. nAChrs containing CHRNA6 subunits mediate endogenous cholinergic modulation of dopamine and gamma-aminobutyric acid (GABA) release in response to nicotine at nerve terminals. The sequence is that of Neuronal acetylcholine receptor subunit alpha-6 (Chrna6) from Rattus norvegicus (Rat).